Here is a 179-residue protein sequence, read N- to C-terminus: Large ribosomal subunit protein uL5 (179 aa).

The protein belongs to the universal ribosomal protein uL5 family. As to quaternary structure, part of the 50S ribosomal subunit; part of the 5S rRNA/L5/L18/L25 subcomplex. Contacts the 5S rRNA and the P site tRNA. Forms a bridge to the 30S subunit in the 70S ribosome.

In terms of biological role, this is one of the proteins that bind and probably mediate the attachment of the 5S RNA into the large ribosomal subunit, where it forms part of the central protuberance. In the 70S ribosome it contacts protein S13 of the 30S subunit (bridge B1b), connecting the 2 subunits; this bridge is implicated in subunit movement. Contacts the P site tRNA; the 5S rRNA and some of its associated proteins might help stabilize positioning of ribosome-bound tRNAs. The chain is Large ribosomal subunit protein uL5 from Rickettsia prowazekii (strain Madrid E).